Reading from the N-terminus, the 1002-residue chain is Golgin subfamily A member 2 (1002 aa).

A compositionally biased stretch (pro residues) spans Met1–Pro11. The interval Met1–Thr84 is interaction with p115/USO1. Positions Met1 to Asp107 are disordered. A coiled-coil region spans residues Glu16 to Leu892. Dimethylated arginine is present on residues Arg18, Arg30, and Arg35. A Nuclear localization signal motif is present at residues Lys26 to Lys49. Position 37 is a phosphoserine (Ser37). Over residues Asn52–Gly63 the composition is skewed to polar residues. Ser66 carries the phosphoserine modification. Over residues Ala95–Asn105 the composition is skewed to polar residues. Residues Ser273, Ser438, and Ser690 each carry the phosphoserine modification. Residues His694 to Pro724 form a disordered region. Residues Asp702–Ala716 are compositionally biased toward acidic residues. Phosphoserine occurs at positions 937, 953, and 981. The interval Asp992–Ile1002 is interaction with GORASP1/GRASP65.

Belongs to the GOLGA2 family. In terms of assembly, homodimer, may assemble into homohexamers. Homotetramer; forms a parallel homotetramer with a flexible rod-like structure that can give rise to I- and Y-shaped conformations. Interacts with GORASP1/GRASP65. The homooligomer forms a complex with GORASP1 with a 1:1 stoichiometry. Interacts with RAB1B that has been activated by GTP-binding. Interacts with p115/USO1; interaction with p115/USO1 inhibits interaction with STX5 and/or RAB1B. Interacts with STX5. Interacts with ZFPL1. Interacts with AKAP450/AKAP9; leading to recruit AKAP450/AKAP9 to the cis-Golgi. Post-translationally, cleaved by caspases at the onset of apoptosis. In terms of processing, methylation by PRMT5 is required for Golgi ribbon formation. While dimethylation at Arg-30 and Arg-35 are confirmed in vivo, it is unclear whether Arg-18 is methylated in vivo. Phosphorylated at Ser-37 by CDK1 at the onset of mitosis, inhibiting the interaction with p115/USO1 and triggering Golgi disassembly. Phosphorylated at Ser-37 in prophase as the Golgi complex starts to break down, and remains phosphorylated during further breakdown and partitioning of the Golgi fragments in metaphase and anaphase. In telophase, GM130 is dephosphorylated by PP2A as the Golgi fragments start to reassemble.

The protein resides in the golgi apparatus. Its subcellular location is the cis-Golgi network membrane. It localises to the endoplasmic reticulum-Golgi intermediate compartment membrane. The protein localises to the cytoplasm. It is found in the cytoskeleton. The protein resides in the spindle pole. Functionally, peripheral membrane component of the cis-Golgi stack that acts as a membrane skeleton that maintains the structure of the Golgi apparatus, and as a vesicle thether that facilitates vesicle fusion to the Golgi membrane. Required for normal protein transport from the endoplasmic reticulum to the Golgi apparatus and the cell membrane. Together with p115/USO1 and STX5, involved in vesicle tethering and fusion at the cis-Golgi membrane to maintain the stacked and inter-connected structure of the Golgi apparatus. Plays a central role in mitotic Golgi disassembly: phosphorylation at Ser-37 by CDK1 at the onset of mitosis inhibits the interaction with p115/USO1, preventing tethering of COPI vesicles and thereby inhibiting transport through the Golgi apparatus during mitosis. Also plays a key role in spindle pole assembly and centrosome organization. Promotes the mitotic spindle pole assembly by activating the spindle assembly factor TPX2 to nucleate microtubules around the Golgi and capture them to couple mitotic membranes to the spindle: upon phosphorylation at the onset of mitosis, GOLGA2 interacts with importin-alpha via the nuclear localization signal region, leading to recruit importin-alpha to the Golgi membranes and liberate the spindle assembly factor TPX2 from importin-alpha. TPX2 then activates AURKA kinase and stimulates local microtubule nucleation. Upon filament assembly, nascent microtubules are further captured by GOLGA2, thus linking Golgi membranes to the spindle. Regulates the meiotic spindle pole assembly, probably via the same mechanism. Also regulates the centrosome organization. Also required for the Golgi ribbon formation and glycosylation of membrane and secretory proteins. This is Golgin subfamily A member 2 (GOLGA2) from Homo sapiens (Human).